The chain runs to 438 residues: Serine carboxypeptidase-like 5 (438 aa).

An N-terminal signal peptide occupies residues 1–28 (MANYISSVLKSLLLLLHLVFLIQQHVDS). Disulfide bonds link Cys87/Cys328, Cys251/Cys263, and Cys287/Cys294. An N-linked (GlcNAc...) asparagine glycan is attached at Asn108. Ser183 is an active-site residue. An N-linked (GlcNAc...) asparagine glycan is attached at Asn347. Asp363 is an active-site residue. An N-linked (GlcNAc...) asparagine glycan is attached at Asn379. His416 is an active-site residue.

Belongs to the peptidase S10 family. Expressed in seedlings, roots, and siliques.

Its subcellular location is the secreted. Probable carboxypeptidase. In Arabidopsis thaliana (Mouse-ear cress), this protein is Serine carboxypeptidase-like 5 (SCPL5).